A 381-amino-acid polypeptide reads, in one-letter code: Probable envelope ADP,ATP carrier protein, chloroplastic (381 aa).

Residues 1–26 (MEEDRAILTFHRIPSLNSSLITTSSP) constitute a chloroplast transit peptide. 5 consecutive transmembrane segments (helical) span residues 78–98 (LAILALVPKDAAIFAAGALAG), 154–179 (LPQVIRVLPYSAVQLLAYESYKNLFK), 191–211 (LAAGACAGMTSTLLTYPLDVL), 237–257 (IASFYYGLGPSLVGIAPYIAV), and 281–301 (LLTAVLSAGIATLTCYPLDTV). 3 Solcar repeats span residues 85–177 (PKDA…YKNL), 185–268 (LSVI…VKKS), and 279–359 (SSLL…VKRL). R159 is an ADP binding site. R302 lines the ADP pocket. Residues 334 to 360 (GFLPNALKTLPNSSIRLTTFDMVKRLI) traverse the membrane as a helical segment.

Belongs to the mitochondrial carrier (TC 2.A.29) family.

The protein resides in the plastid. Its subcellular location is the chloroplast membrane. Transports adenine nucleotides. In Arabidopsis thaliana (Mouse-ear cress), this protein is Probable envelope ADP,ATP carrier protein, chloroplastic (EAAC).